The chain runs to 245 residues: Thioredoxin-like 1-2, chloroplastic (245 aa).

Residues 1 to 92 (MDAISSLGTN…TNHNMLEIQS (92 aa)) constitute a chloroplast transit peptide. The Thioredoxin domain maps to 93 to 194 (ANHLVDSLLN…FKKALDKHGS (102 aa)). Active-site nucleophile residues include Cys117 and Cys120. An intrachain disulfide couples Cys117 to Cys120.

This sequence belongs to the thioredoxin family.

The protein resides in the plastid. Its subcellular location is the chloroplast. In terms of biological role, probable thiol-disulfide oxidoreductase that may participate in various redox reactions. The chain is Thioredoxin-like 1-2, chloroplastic from Arabidopsis thaliana (Mouse-ear cress).